Here is a 250-residue protein sequence, read N- to C-terminus: Pyrroloquinoline-quinone synthase (250 aa).

It belongs to the PqqC family.

It carries out the reaction 6-(2-amino-2-carboxyethyl)-7,8-dioxo-1,2,3,4,7,8-hexahydroquinoline-2,4-dicarboxylate + 3 O2 = pyrroloquinoline quinone + 2 H2O2 + 2 H2O + H(+). It functions in the pathway cofactor biosynthesis; pyrroloquinoline quinone biosynthesis. In terms of biological role, ring cyclization and eight-electron oxidation of 3a-(2-amino-2-carboxyethyl)-4,5-dioxo-4,5,6,7,8,9-hexahydroquinoline-7,9-dicarboxylic-acid to PQQ. The polypeptide is Pyrroloquinoline-quinone synthase (Xanthomonas campestris pv. campestris (strain 8004)).